The chain runs to 271 residues: Probable esterase D14L (271 aa).

Residue Ser-96 is the Nucleophile of the active site. Catalysis depends on residues Asp-218 and His-247.

The protein belongs to the AB hydrolase superfamily. Component of an intracellular receptor complex involved in the detection of the smoke compound karrikin. Expressed constitutively in all organs (e.g. roots, stems, leaves, panicles and embryos).

It localises to the nucleus. Its subcellular location is the cytoplasm. May be involved in strigolactone signaling pathway. Essential for plant responses to karrikins, a class of butenolide compounds, structurally similar to strigolactones, released from burning vegetation that stimulate seed germination and enhance seedling photomorphogenesis. Mediates a specific perception of karrikin. Required for the establishment of symbiosis with the arbuscular mycorrhizal fungi (AMF) Rhizophagus irregularis and Gigaspora rosea. Karrikin binding induces a conformational change. This is Probable esterase D14L (D14L) from Oryza sativa subsp. japonica (Rice).